We begin with the raw amino-acid sequence, 482 residues long: Cysteine--tRNA ligase (482 aa).

Residue Cys-29 coordinates Zn(2+). The 'HIGH' region signature appears at 31-41 (PTVYDSAHVGH). Positions 210, 235, and 239 each coordinate Zn(2+). The 'KMSKS' region motif lies at 272 to 276 (KMSKS). Lys-275 is a binding site for ATP.

This sequence belongs to the class-I aminoacyl-tRNA synthetase family. As to quaternary structure, monomer. Requires Zn(2+) as cofactor.

It is found in the cytoplasm. The enzyme catalyses tRNA(Cys) + L-cysteine + ATP = L-cysteinyl-tRNA(Cys) + AMP + diphosphate. The sequence is that of Cysteine--tRNA ligase from Anaeromyxobacter sp. (strain Fw109-5).